The chain runs to 295 residues: Protease HtpX homolog (295 aa).

Transmembrane regions (helical) follow at residues 6-26 (IGLF…VTSV) and 40-60 (LSSL…VSLL). Histidine 148 provides a ligand contact to Zn(2+). Glutamate 149 is an active-site residue. Histidine 152 serves as a coordination point for Zn(2+). 2 helical membrane passes run 163-183 (LIQG…SYAL) and 198-218 (ISNI…VAYF). Glutamate 223 is a Zn(2+) binding site.

It belongs to the peptidase M48B family. The cofactor is Zn(2+).

The protein resides in the cell inner membrane. This Leptospira borgpetersenii serovar Hardjo-bovis (strain JB197) protein is Protease HtpX homolog.